The chain runs to 407 residues: Imidazolonepropionase (407 aa).

Residues His74 and His76 each coordinate Fe(3+). His74 and His76 together coordinate Zn(2+). 3 residues coordinate 4-imidazolone-5-propanoate: Arg83, Tyr146, and His179. N-formimidoyl-L-glutamate is bound at residue Tyr146. Residue His244 participates in Fe(3+) binding. A Zn(2+)-binding site is contributed by His244. Gln247 is a 4-imidazolone-5-propanoate binding site. Asp319 provides a ligand contact to Fe(3+). Asp319 is a binding site for Zn(2+). Positions 321 and 323 each coordinate N-formimidoyl-L-glutamate. Thr324 contributes to the 4-imidazolone-5-propanoate binding site.

This sequence belongs to the metallo-dependent hydrolases superfamily. HutI family. Requires Zn(2+) as cofactor. Fe(3+) is required as a cofactor.

It localises to the cytoplasm. The enzyme catalyses 4-imidazolone-5-propanoate + H2O = N-formimidoyl-L-glutamate. It functions in the pathway amino-acid degradation; L-histidine degradation into L-glutamate; N-formimidoyl-L-glutamate from L-histidine: step 3/3. Catalyzes the hydrolytic cleavage of the carbon-nitrogen bond in imidazolone-5-propanoate to yield N-formimidoyl-L-glutamate. It is the third step in the universal histidine degradation pathway. The chain is Imidazolonepropionase from Salmonella typhi.